The primary structure comprises 284 residues: Four and a half LIM domains protein 5 (284 aa).

The C4-type zinc-finger motif lies at 8 to 32; that stretch reads CQYCMASLLGKKYVLKDDNPYCVSC. 4 LIM zinc-binding domains span residues 39–100, 101–160, 161–220, and 223–283; these read NYCE…ECSS, KCFH…KEFA, HYCS…LYAK, and AACT…VDTD.

In terms of assembly, interacts with CREM (via the third LIM domain). Interacts (via second LIM domain) with SPAG8.

It localises to the nucleus. In terms of biological role, may be involved in the regulation of spermatogenesis. Stimulates CREM transcriptional activity in a phosphorylation-independent manner. The polypeptide is Four and a half LIM domains protein 5 (FHL5) (Bos taurus (Bovine)).